Consider the following 199-residue polypeptide: Recombination protein RecR (199 aa).

Residues 57-72 (CQSCRTFTEETYCPIC) form a C4-type zinc finger. One can recognise a Toprim domain in the interval 81–176 (DIICVVETPA…MVSRIAHGVP (96 aa)).

The protein belongs to the RecR family.

May play a role in DNA repair. It seems to be involved in an RecBC-independent recombinational process of DNA repair. It may act with RecF and RecO. The protein is Recombination protein RecR of Shewanella halifaxensis (strain HAW-EB4).